The primary structure comprises 394 residues: Probable peptidoglycan glycosyltransferase FtsW (394 aa).

Residues M1–A27 lie on the Cytoplasmic side of the membrane. Residues L28–I48 form a helical membrane-spanning segment. At P49 to A66 the chain is on the periplasmic side. A helical membrane pass occupies residues I67–W87. Over E88–K93 the chain is Cytoplasmic. A helical membrane pass occupies residues I94–G114. Residues A115–S120 lie on the Periplasmic side of the membrane. The helical transmembrane segment at L121–A141 threads the bilayer. Topologically, residues S142–H155 are cytoplasmic. 2 helical membrane-spanning segments follow: residues V156 to P176 and D177 to A197. Position 198 (K198) is a topological domain, cytoplasmic. Residues I199–T219 traverse the membrane as a helical segment. Topologically, residues A220–D277 are periplasmic. A helical transmembrane segment spans residues F278–L298. Over L299–G322 the chain is Cytoplasmic. A helical membrane pass occupies residues F323–A343. The Periplasmic segment spans residues L344 to T353. Residues F354 to L374 traverse the membrane as a helical segment. Topologically, residues L375 to D394 are cytoplasmic.

The protein belongs to the SEDS family. FtsW subfamily.

It is found in the cell inner membrane. It catalyses the reaction [GlcNAc-(1-&gt;4)-Mur2Ac(oyl-L-Ala-gamma-D-Glu-L-Lys-D-Ala-D-Ala)](n)-di-trans,octa-cis-undecaprenyl diphosphate + beta-D-GlcNAc-(1-&gt;4)-Mur2Ac(oyl-L-Ala-gamma-D-Glu-L-Lys-D-Ala-D-Ala)-di-trans,octa-cis-undecaprenyl diphosphate = [GlcNAc-(1-&gt;4)-Mur2Ac(oyl-L-Ala-gamma-D-Glu-L-Lys-D-Ala-D-Ala)](n+1)-di-trans,octa-cis-undecaprenyl diphosphate + di-trans,octa-cis-undecaprenyl diphosphate + H(+). It participates in cell wall biogenesis; peptidoglycan biosynthesis. Peptidoglycan polymerase that is essential for cell division. This Haemophilus influenzae (strain ATCC 51907 / DSM 11121 / KW20 / Rd) protein is Probable peptidoglycan glycosyltransferase FtsW.